Here is a 382-residue protein sequence, read N- to C-terminus: Neuropeptide Y receptor type 1 (382 aa).

The Extracellular segment spans residues 1–33; it reads MNSTSFSQVENHSIFCNFSENSQFLAFESDDCH. N-linked (GlcNAc...) asparagine glycans are attached at residues Asn-2, Asn-11, and Asn-17. Residues 34–54 form a helical membrane-spanning segment; it reads LPLAMIFTLALAYGAVIILGV. The Cytoplasmic segment spans residues 55–75; the sequence is TGNLALIMIILKQKEMRNVTN. Residues 76 to 96 traverse the membrane as a helical segment; that stretch reads ILIVNLSFSDLLVAIMCLPFT. Over 97-115 the chain is Extracellular; sequence FVYTLMDHWVFGEAMCKLN. Cys-112 and Cys-197 are joined by a disulfide. A helical membrane pass occupies residues 116 to 136; sequence PFVQCVSITVSIFSLVLIAVE. Residues 137-153 lie on the Cytoplasmic side of the membrane; it reads RHQLIINPRGWRPNNRH. Residues 154–174 form a helical membrane-spanning segment; that stretch reads AYVGIAVIWVLAVVSSLPFLI. Over 175 to 210 the chain is Extracellular; the sequence is YQVLTDEPFQNVTLDAFKDKYVCFDKFPSDSHRLSY. Residue Asn-185 is glycosylated (N-linked (GlcNAc...) asparagine). Residues 211-231 traverse the membrane as a helical segment; the sequence is TTLLLMLQYFGPLCFIFICYF. Topologically, residues 232–259 are cytoplasmic; it reads KIYIRLKRRNNMMDKMRDNKYRSSETKR. The chain crosses the membrane as a helical span at residues 260–280; it reads INIMLLSIVVAFAVCWLPLTI. The Extracellular segment spans residues 281–298; that stretch reads FNTVFDWNHQIIATCNHN. The helical transmembrane segment at 299–319 threads the bilayer; sequence LLFLLCHLTAMISTCVNPIFY. Residues 320 to 382 are Cytoplasmic-facing; sequence GFLNKNFQRD…KINNDDNEKI (63 aa). Residue Cys-337 is the site of S-palmitoyl cysteine attachment. At Ser-367 the chain carries Phosphoserine.

Belongs to the G-protein coupled receptor 1 family.

Its subcellular location is the cell membrane. Functionally, receptor for neuropeptide Y and peptide YY. This is Neuropeptide Y receptor type 1 (NPY1R) from Canis lupus familiaris (Dog).